Consider the following 313-residue polypeptide: Porphobilinogen deaminase (313 aa).

C242 bears the S-(dipyrrolylmethanemethyl)cysteine mark.

It belongs to the HMBS family. In terms of assembly, monomer. Requires dipyrromethane as cofactor.

It carries out the reaction 4 porphobilinogen + H2O = hydroxymethylbilane + 4 NH4(+). It functions in the pathway porphyrin-containing compound metabolism; protoporphyrin-IX biosynthesis; coproporphyrinogen-III from 5-aminolevulinate: step 2/4. Functionally, tetrapolymerization of the monopyrrole PBG into the hydroxymethylbilane pre-uroporphyrinogen in several discrete steps. The sequence is that of Porphobilinogen deaminase from Photorhabdus laumondii subsp. laumondii (strain DSM 15139 / CIP 105565 / TT01) (Photorhabdus luminescens subsp. laumondii).